We begin with the raw amino-acid sequence, 340 residues long: uncharacterized protein (340 aa).

Residues 1–23 (MQKKVLSLVLVLAVLESIVPVSA) form the signal peptide.

This is an uncharacterized protein from Archaeoglobus fulgidus (strain ATCC 49558 / DSM 4304 / JCM 9628 / NBRC 100126 / VC-16).